The primary structure comprises 327 residues: Quinone oxidoreductase (327 aa).

This sequence belongs to the zinc-containing alcohol dehydrogenase family. Quinone oxidoreductase subfamily. In terms of assembly, homodimer.

The enzyme catalyses 2 a quinone + NADPH + H(+) = 2 a 1,4-benzosemiquinone + NADP(+). This is Quinone oxidoreductase (qor) from Salmonella typhimurium (strain LT2 / SGSC1412 / ATCC 700720).